The following is a 199-amino-acid chain: Recombination protein RecR (199 aa).

A C4-type zinc finger spans residues 58–73 (CKTCGNIDTQSPCTVC). The region spanning 81–176 (AMIVVVADVA…KVTRLAHGVP (96 aa)) is the Toprim domain.

Belongs to the RecR family.

Functionally, may play a role in DNA repair. It seems to be involved in an RecBC-independent recombinational process of DNA repair. It may act with RecF and RecO. The protein is Recombination protein RecR of Bradyrhizobium sp. (strain BTAi1 / ATCC BAA-1182).